The sequence spans 391 residues: NAD(P)H-quinone oxidoreductase subunit H, chloroplastic (391 aa).

The protein belongs to the complex I 49 kDa subunit family. As to quaternary structure, NDH is composed of at least 16 different subunits, 5 of which are encoded in the nucleus.

It is found in the plastid. The protein resides in the chloroplast thylakoid membrane. The enzyme catalyses a plastoquinone + NADH + (n+1) H(+)(in) = a plastoquinol + NAD(+) + n H(+)(out). It carries out the reaction a plastoquinone + NADPH + (n+1) H(+)(in) = a plastoquinol + NADP(+) + n H(+)(out). NDH shuttles electrons from NAD(P)H:plastoquinone, via FMN and iron-sulfur (Fe-S) centers, to quinones in the photosynthetic chain and possibly in a chloroplast respiratory chain. The immediate electron acceptor for the enzyme in this species is believed to be plastoquinone. Couples the redox reaction to proton translocation, and thus conserves the redox energy in a proton gradient. The chain is NAD(P)H-quinone oxidoreductase subunit H, chloroplastic from Physcomitrium patens (Spreading-leaved earth moss).